The sequence spans 573 residues: 2-succinyl-5-enolpyruvyl-6-hydroxy-3-cyclohexene-1-carboxylate synthase (573 aa).

Belongs to the TPP enzyme family. MenD subfamily. In terms of assembly, homodimer. It depends on Mg(2+) as a cofactor. The cofactor is Mn(2+). Thiamine diphosphate serves as cofactor.

It carries out the reaction isochorismate + 2-oxoglutarate + H(+) = 5-enolpyruvoyl-6-hydroxy-2-succinyl-cyclohex-3-ene-1-carboxylate + CO2. It participates in quinol/quinone metabolism; 1,4-dihydroxy-2-naphthoate biosynthesis; 1,4-dihydroxy-2-naphthoate from chorismate: step 2/7. Its pathway is quinol/quinone metabolism; menaquinone biosynthesis. In terms of biological role, catalyzes the thiamine diphosphate-dependent decarboxylation of 2-oxoglutarate and the subsequent addition of the resulting succinic semialdehyde-thiamine pyrophosphate anion to isochorismate to yield 2-succinyl-5-enolpyruvyl-6-hydroxy-3-cyclohexene-1-carboxylate (SEPHCHC). The polypeptide is 2-succinyl-5-enolpyruvyl-6-hydroxy-3-cyclohexene-1-carboxylate synthase (Shewanella oneidensis (strain ATCC 700550 / JCM 31522 / CIP 106686 / LMG 19005 / NCIMB 14063 / MR-1)).